The chain runs to 279 residues: NAD kinase (279 aa).

The Proton acceptor role is filled by D57. NAD(+) contacts are provided by residues 57–58, 133–134, R159, D161, 172–177, and A196; these read DG, NE, and TAYNKS.

This sequence belongs to the NAD kinase family. A divalent metal cation serves as cofactor.

The protein resides in the cytoplasm. It catalyses the reaction NAD(+) + ATP = ADP + NADP(+) + H(+). Its function is as follows. Involved in the regulation of the intracellular balance of NAD and NADP, and is a key enzyme in the biosynthesis of NADP. Catalyzes specifically the phosphorylation on 2'-hydroxyl of the adenosine moiety of NAD to yield NADP. This chain is NAD kinase, found in Streptococcus thermophilus (strain CNRZ 1066).